A 159-amino-acid chain; its full sequence is Small ribosomal subunit protein uS19 (159 aa).

It belongs to the universal ribosomal protein uS19 family.

Its function is as follows. Protein S19 forms a complex with S13 that binds strongly to the 16S ribosomal RNA. The polypeptide is Small ribosomal subunit protein uS19 (Pyrobaculum arsenaticum (strain DSM 13514 / JCM 11321 / PZ6)).